A 294-amino-acid chain; its full sequence is Protein ATC1/LIC4 (294 aa).

Positions 114 to 178 (YTGKASLDKS…SSSLASSDAN (65 aa)) are disordered. Basic and acidic residues predominate over residues 130 to 145 (HKPDKEQKNYKIDKPT). Low complexity predominate over residues 153-175 (LKTTNEPMLSPASLSPSSSLASS).

Its subcellular location is the cytoplasm. It is found in the nucleus. In terms of biological role, involved in cation homeostasis and in the regulation of the cation stress signaling cascades. Also involved in bipolar budding. This chain is Protein ATC1/LIC4 (ATC1), found in Saccharomyces cerevisiae (strain ATCC 204508 / S288c) (Baker's yeast).